The sequence spans 448 residues: Phosphoglucosamine mutase (448 aa).

Ser-102 serves as the catalytic Phosphoserine intermediate. 4 residues coordinate Mg(2+): Ser-102, Asp-243, Asp-245, and Asp-247. Position 102 is a phosphoserine (Ser-102).

It belongs to the phosphohexose mutase family. Mg(2+) serves as cofactor. Activated by phosphorylation.

The enzyme catalyses alpha-D-glucosamine 1-phosphate = D-glucosamine 6-phosphate. Functionally, catalyzes the conversion of glucosamine-6-phosphate to glucosamine-1-phosphate. In Parvibaculum lavamentivorans (strain DS-1 / DSM 13023 / NCIMB 13966), this protein is Phosphoglucosamine mutase.